The following is a 198-amino-acid chain: Phosphoheptose isomerase (198 aa).

Positions 36 to 195 constitute an SIS domain; that stretch reads AIEVYQNGNK…EEAIFRNKFV (160 aa). Residue 51–53 participates in substrate binding; sequence NGG. 2 residues coordinate Zn(2+): His60 and Glu64. Substrate-binding positions include Glu64, 93–94, 119–121, Ser124, and Gln171; these read ND and STS. Zn(2+) is bound by residues Gln171 and His179.

The protein belongs to the SIS family. GmhA subfamily. Zn(2+) is required as a cofactor.

The protein resides in the cytoplasm. The catalysed reaction is 2 D-sedoheptulose 7-phosphate = D-glycero-alpha-D-manno-heptose 7-phosphate + D-glycero-beta-D-manno-heptose 7-phosphate. Its pathway is carbohydrate biosynthesis; D-glycero-D-manno-heptose 7-phosphate biosynthesis; D-glycero-alpha-D-manno-heptose 7-phosphate and D-glycero-beta-D-manno-heptose 7-phosphate from sedoheptulose 7-phosphate: step 1/1. The protein operates within cell surface structure biogenesis; S-layer biogenesis. Functionally, catalyzes the isomerization of sedoheptulose 7-phosphate in D-glycero-D-manno-heptose 7-phosphate. The sequence is that of Phosphoheptose isomerase from Aneurinibacillus thermoaerophilus.